A 228-amino-acid polypeptide reads, in one-letter code: Small ribosomal subunit protein uS3 (228 aa).

Residues 39-107 (IRKELNEKLK…PVNINIEEIK (69 aa)) form the KH type-2 domain.

Belongs to the universal ribosomal protein uS3 family. As to quaternary structure, part of the 30S ribosomal subunit. Forms a tight complex with proteins S10 and S14.

In terms of biological role, binds the lower part of the 30S subunit head. Binds mRNA in the 70S ribosome, positioning it for translation. The sequence is that of Small ribosomal subunit protein uS3 from Hydrogenovibrio crunogenus (strain DSM 25203 / XCL-2) (Thiomicrospira crunogena).